Reading from the N-terminus, the 418-residue chain is Diaminopimelate decarboxylase (418 aa).

Position 53 is an N6-(pyridoxal phosphate)lysine (Lys53). Pyridoxal 5'-phosphate is bound by residues Gly223 and 264–267; that span reads EPGR. 3 residues coordinate substrate: Arg267, Arg303, and Tyr307. Cys338 functions as the Proton donor in the catalytic mechanism. Glu339 and Tyr374 together coordinate substrate. Residue Tyr374 participates in pyridoxal 5'-phosphate binding.

The protein belongs to the Orn/Lys/Arg decarboxylase class-II family. LysA subfamily. Homodimer. The cofactor is pyridoxal 5'-phosphate.

The enzyme catalyses meso-2,6-diaminopimelate + H(+) = L-lysine + CO2. It participates in amino-acid biosynthesis; L-lysine biosynthesis via DAP pathway; L-lysine from DL-2,6-diaminopimelate: step 1/1. In terms of biological role, specifically catalyzes the decarboxylation of meso-diaminopimelate (meso-DAP) to L-lysine. The sequence is that of Diaminopimelate decarboxylase from Buchnera aphidicola subsp. Baizongia pistaciae (strain Bp).